A 513-amino-acid chain; its full sequence is ATP synthase subunit alpha (513 aa).

169–176 (GDRQTGKT) serves as a coordination point for ATP.

It belongs to the ATPase alpha/beta chains family. In terms of assembly, F-type ATPases have 2 components, CF(1) - the catalytic core - and CF(0) - the membrane proton channel. CF(1) has five subunits: alpha(3), beta(3), gamma(1), delta(1), epsilon(1). CF(0) has three main subunits: a(1), b(2) and c(9-12). The alpha and beta chains form an alternating ring which encloses part of the gamma chain. CF(1) is attached to CF(0) by a central stalk formed by the gamma and epsilon chains, while a peripheral stalk is formed by the delta and b chains.

The protein localises to the cell inner membrane. The catalysed reaction is ATP + H2O + 4 H(+)(in) = ADP + phosphate + 5 H(+)(out). Its function is as follows. Produces ATP from ADP in the presence of a proton gradient across the membrane. The alpha chain is a regulatory subunit. The protein is ATP synthase subunit alpha of Cupriavidus pinatubonensis (strain JMP 134 / LMG 1197) (Cupriavidus necator (strain JMP 134)).